A 445-amino-acid chain; its full sequence is Argininosuccinate synthase (445 aa).

Residues Ala17–Ser25 and Ala43 each bind ATP. L-citrulline is bound at residue Tyr99. Residues Gly129 and Thr131 each contribute to the ATP site. The L-aspartate site is built by Thr131, Asn135, and Asp136. Asn135 lines the L-citrulline pocket. Asp136 is an ATP binding site. L-citrulline contacts are provided by Arg139 and Ser192. Asp194 provides a ligand contact to ATP. Thr201, Glu203, and Glu280 together coordinate L-citrulline.

This sequence belongs to the argininosuccinate synthase family. Type 2 subfamily. Homotetramer.

The protein resides in the cytoplasm. It carries out the reaction L-citrulline + L-aspartate + ATP = 2-(N(omega)-L-arginino)succinate + AMP + diphosphate + H(+). Its pathway is amino-acid biosynthesis; L-arginine biosynthesis; L-arginine from L-ornithine and carbamoyl phosphate: step 2/3. The polypeptide is Argininosuccinate synthase (Ralstonia pickettii (strain 12J)).